The chain runs to 127 residues: UPF0102 protein Paes_0016 (127 aa).

Belongs to the UPF0102 family.

The chain is UPF0102 protein Paes_0016 from Prosthecochloris aestuarii (strain DSM 271 / SK 413).